The primary structure comprises 704 residues: Low calcium response locus protein D (704 aa).

Helical transmembrane passes span Ile18–Leu35, Ile42–Ile61, Phe108–Ile132, Ala200–Thr220, Ile235–Val259, Val278–Leu297, and Val304–Leu320.

It belongs to the FHIPEP (flagella/HR/invasion proteins export pore) family.

The protein resides in the cell inner membrane. In terms of biological role, could be involved in the secretion of the yop virulence proteins. This chain is Low calcium response locus protein D (lcrD), found in Yersinia pestis.